Here is a 350-residue protein sequence, read N- to C-terminus: MKVSSQLAVAALASFATAASVDVHKRETPLSVKLAASGNSEVKVTLTNNGEKTLNLLSKGTFLDEQLPVEKVQMYAAGGSDKVAFEGMKVRLLTSGLKADDFVTLAAGETKEITVETAALHSLHEGGDFDVFAKGALPFAEGASTELAGALDYESNKLSMTIDGAQAASVAKALNKRTAIGSSCTGTKLSTVRTALSNCARLANAAASAATSGTKLTTYFKTTSSASTVAARLRAVASDCGSTSSRTTTNCNDPYSGCSSNVLAYTVPSANFITYCPIFFSALPALASTCHGQDQATTALHEETHAPGVYSPGTQDNGYGYAAATALSANQALNNADSYALYANAINLNC.

The first 18 residues, 1-18 (MKVSSQLAVAALASFATA), serve as a signal peptide directing secretion. Residues 19 to 180 (ASVDVHKRET…AKALNKRTAI (162 aa)) constitute a propeptide that is removed on maturation. 2 cysteine pairs are disulfide-bonded: Cys-184-Cys-251 and Cys-258-Cys-276. His-301 serves as a coordination point for Zn(2+). Glu-302 is a catalytic residue. Residues His-305 and Asp-316 each contribute to the Zn(2+) site.

Belongs to the peptidase M35 family. Zn(2+) is required as a cofactor.

The protein resides in the secreted. It catalyses the reaction Preferential cleavage of bonds with hydrophobic residues in P1'. Also 3-Asn-|-Gln-4 and 8-Gly-|-Ser-9 bonds in insulin B chain.. In terms of biological role, secreted metalloproteinase that allows assimilation of proteinaceous substrates. Shows high activities on basic nuclear substrates such as histone and protamine. This chain is Neutral protease 2 homolog SNOG_10522, found in Phaeosphaeria nodorum (strain SN15 / ATCC MYA-4574 / FGSC 10173) (Glume blotch fungus).